The following is a 186-amino-acid chain: Ribosome-recycling factor (186 aa).

Belongs to the RRF family.

It localises to the cytoplasm. Functionally, responsible for the release of ribosomes from messenger RNA at the termination of protein biosynthesis. May increase the efficiency of translation by recycling ribosomes from one round of translation to another. This Rickettsia peacockii (strain Rustic) protein is Ribosome-recycling factor.